We begin with the raw amino-acid sequence, 674 residues long: Sodium/myo-inositol cotransporter 2 (674 aa).

Topologically, residues Met1–Gly27 are extracellular. Residues Asp28 to Val48 form a helical membrane-spanning segment. Residues Lys49 to Lys56 are Cytoplasmic-facing. Residues Gly57–Ser77 form a helical membrane-spanning segment. Residues Asn78–Glu102 are Extracellular-facing. A helical transmembrane segment spans residues Phe103–Gly123. Over Gln124–Arg140 the chain is Cytoplasmic. The helical transmembrane segment at Ile141–Asp161 threads the bilayer. The Extracellular segment spans residues Met162 to Ser180. A helical membrane pass occupies residues Val181–Ile201. The Cytoplasmic portion of the chain corresponds to Tyr202–Thr208. A helical membrane pass occupies residues Leu209 to Met229. Topologically, residues Glu230–Pro272 are extracellular. A helical membrane pass occupies residues Gly273–Val293. At Gln294–Gly308 the chain is on the cytoplasmic side. The helical transmembrane segment at Ser309–Val329 threads the bilayer. Over Ser330–Gly375 the chain is Extracellular. A helical membrane pass occupies residues Leu376–Ala396. Residues Ser397 to Met418 are Cytoplasmic-facing. A helical transmembrane segment spans residues Ile419–Val439. Over Gln440–Gln446 the chain is Extracellular. The chain crosses the membrane as a helical span at residues Leu447–Val467. At Leu468–Gly479 the chain is on the cytoplasmic side. A helical membrane pass occupies residues Ala480–Ile500. At Tyr501–Tyr521 the chain is on the extracellular side. A helical transmembrane segment spans residues Leu522 to Leu542. Over Thr543 to Thr653 the chain is Cytoplasmic. The helical transmembrane segment at Leu654–Ala674 threads the bilayer.

The protein belongs to the sodium:solute symporter (SSF) (TC 2.A.21) family. Expressed in brain, lung and kidney. In the kidney, strongly expressed in the cortex, at the luminal side of proximal convoluted tubules and in BBMVs. Weaker expression observed in the medulla (at protein level).

The protein localises to the membrane. It is found in the apical cell membrane. It carries out the reaction myo-inositol(out) + 2 Na(+)(out) = myo-inositol(in) + 2 Na(+)(in). The catalysed reaction is 1D-chiro-inositol(out) + 2 Na(+)(out) = 1D-chiro-inositol(in) + 2 Na(+)(in). The enzyme catalyses D-glucose(out) + 2 Na(+)(out) = D-glucose(in) + 2 Na(+)(in). It catalyses the reaction D-xylose(out) + 2 Na(+)(out) = D-xylose(in) + 2 Na(+)(in). With respect to regulation, MI transport activity stimulated five-fold under 24 hour hypertonic shock conditions. MI inward currents were gradually inhibited as increasing amounts of phlorizin were added to the superfusion medium. When sodium is replaced by potassium, MI uptake is dramatically reduced and in the presence of L-fucose or D-chiro-inositol (DCI), the specific accumulation of tracer amounts of MI is also reduced. Functionally, involved in the sodium-dependent cotransport of myo-inositol (MI) with a Na(+):MI stoichiometry of 2:1. Exclusively responsible for apical MI transport and absorption in intestine. Can also transport D-chiro-inositol (DCI) but not L-fucose. Exhibits stereospecific cotransport of both D-glucose and D-xylose. May induce apoptosis through the TNF-alpha, PDCD1 pathway. May play a role in the regulation of MI concentration in serum, involving reabsorption in at least the proximal tubule of the kidney. The sequence is that of Sodium/myo-inositol cotransporter 2 from Oryctolagus cuniculus (Rabbit).